Here is a 692-residue protein sequence, read N- to C-terminus: Elongation factor G (692 aa).

The tr-type G domain maps to 8–282; it reads PNTRNIGIMA…NVVAYLPSPV (275 aa). Residues 17 to 24, 81 to 85, and 135 to 138 contribute to the GTP site; these read AHIDAGKT, DTPGH, and NKMD.

Belongs to the TRAFAC class translation factor GTPase superfamily. Classic translation factor GTPase family. EF-G/EF-2 subfamily.

It localises to the cytoplasm. In terms of biological role, catalyzes the GTP-dependent ribosomal translocation step during translation elongation. During this step, the ribosome changes from the pre-translocational (PRE) to the post-translocational (POST) state as the newly formed A-site-bound peptidyl-tRNA and P-site-bound deacylated tRNA move to the P and E sites, respectively. Catalyzes the coordinated movement of the two tRNA molecules, the mRNA and conformational changes in the ribosome. The chain is Elongation factor G from Brevibacillus brevis (strain 47 / JCM 6285 / NBRC 100599).